The chain runs to 334 residues: Proline-serine-threonine phosphatase-interacting protein 2 (334 aa).

Positions 4 to 264 (SLFKGNFWST…SLETCSIEKD (261 aa)) constitute an F-BAR domain. The stretch at 66-163 (GQSEINTLKR…AEQAVHRSAN (98 aa)) forms a coiled coil. The tract at residues 288 to 322 (YSPQRNAAPPGKTTGPNPARRGPLPVPKRIPDDPD) is disordered. Phosphotyrosine is present on residues Tyr-323 and Tyr-329.

Phosphorylated on tyrosine. Expressed in macrophage-containing tissues, including bone marrow, spleen, liver, kidney, intestine and brain.

It is found in the cytoplasm. Its subcellular location is the membrane. Its function is as follows. Binds to F-actin. May be involved in regulation of the actin cytoskeleton. The protein is Proline-serine-threonine phosphatase-interacting protein 2 (Pstpip2) of Mus musculus (Mouse).